A 180-amino-acid chain; its full sequence is Large ribosomal subunit protein uL18m (180 aa).

The protein belongs to the universal ribosomal protein uL18 family. As to quaternary structure, component of the mitochondrial large ribosomal subunit (mt-LSU). Mature mammalian 55S mitochondrial ribosomes consist of a small (28S) and a large (39S) subunit. The 28S small subunit contains a 12S ribosomal RNA (12S mt-rRNA) and 30 different proteins. The 39S large subunit contains a 16S rRNA (16S mt-rRNA), a copy of mitochondrial valine transfer RNA (mt-tRNA(Val)), which plays an integral structural role, and 52 different proteins.

Its subcellular location is the mitochondrion. Its function is as follows. Together with thiosulfate sulfurtransferase (TST), acts as a mitochondrial import factor for the cytosolic 5S rRNA. The precursor form shows RNA chaperone activity; is able to fold the 5S rRNA into an import-competent conformation that is recognized by rhodanese (TST). Both the cytoplasmic and mitochondrial forms are able to bind to the helix IV-loop D in the gamma domain of the 5S rRNA. This Homo sapiens (Human) protein is Large ribosomal subunit protein uL18m (MRPL18).